The sequence spans 503 residues: 11-hydroxysugiol 20-monooxygenase (503 aa).

The chain crosses the membrane as a helical span at residues 2 to 22 (QVLIVASLAFLAAWLVYSRWS). C446 is a binding site for heme.

Belongs to the cytochrome P450 family. Heme serves as cofactor. As to expression, highly expressed in roots.

The protein localises to the membrane. It catalyses the reaction 11-hydroxysugiol + reduced [NADPH--hemoprotein reductase] + O2 = 11,20-dihydroxysugiol + oxidized [NADPH--hemoprotein reductase] + H2O + H(+). It carries out the reaction 11-hydroxyferruginol + reduced [NADPH--hemoprotein reductase] + O2 = 11,20-dihydroxyferruginol + oxidized [NADPH--hemoprotein reductase] + H2O + H(+). Its pathway is secondary metabolite biosynthesis; terpenoid biosynthesis. Monooxygenase that oxidizes 11-hydroxysugiol to produce 11,20-dihydroxysugiol. Can oxidize 11-hydroxyferruginol to produce 11,20-dihydroxyferruginol. These products are intermediates in tanshinone biosynthesis. The polypeptide is 11-hydroxysugiol 20-monooxygenase (Salvia miltiorrhiza (Chinese sage)).